A 362-amino-acid chain; its full sequence is Probable dual-specificity RNA methyltransferase RlmN (362 aa).

Glu-105 serves as the catalytic Proton acceptor. In terms of domain architecture, Radical SAM core spans 111–344 (HEYGNSICVT…VTIRREQGHD (234 aa)). A disulfide bridge links Cys-118 with Cys-349. [4Fe-4S] cluster-binding residues include Cys-125, Cys-129, and Cys-132. S-adenosyl-L-methionine-binding positions include 175–176 (GE), Ser-207, 230–232 (SLH), and Asn-306. Cys-349 (S-methylcysteine intermediate) is an active-site residue.

This sequence belongs to the radical SAM superfamily. RlmN family. [4Fe-4S] cluster serves as cofactor.

The protein localises to the cytoplasm. It carries out the reaction adenosine(2503) in 23S rRNA + 2 reduced [2Fe-2S]-[ferredoxin] + 2 S-adenosyl-L-methionine = 2-methyladenosine(2503) in 23S rRNA + 5'-deoxyadenosine + L-methionine + 2 oxidized [2Fe-2S]-[ferredoxin] + S-adenosyl-L-homocysteine. The enzyme catalyses adenosine(37) in tRNA + 2 reduced [2Fe-2S]-[ferredoxin] + 2 S-adenosyl-L-methionine = 2-methyladenosine(37) in tRNA + 5'-deoxyadenosine + L-methionine + 2 oxidized [2Fe-2S]-[ferredoxin] + S-adenosyl-L-homocysteine. Functionally, specifically methylates position 2 of adenine 2503 in 23S rRNA and position 2 of adenine 37 in tRNAs. This Bacillus anthracis (strain CDC 684 / NRRL 3495) protein is Probable dual-specificity RNA methyltransferase RlmN.